A 289-amino-acid polypeptide reads, in one-letter code: Zinc finger matrin-type protein 3 (289 aa).

Matrin-type zinc fingers lie at residues 70–100 and 147–177; these read LFCK…KLRN and DYCK…RLRL. 2 disordered regions span residues 180–202 and 265–289; these read AQSH…EGSE and ESKQ…GYVQ. Residues 245–275 form a Matrin-type 3 zinc finger; it reads FYCSMCNVGAGEEVEFRQHLESKQHKSKVSE. Positions 265–282 are enriched in basic and acidic residues; it reads ESKQHKSKVSEQRYRSEM.

In terms of assembly, interacts with dsRNA. In terms of tissue distribution, highly expressed in brain, gut, lung, and testis.

Its subcellular location is the nucleus. The protein localises to the nucleolus. Acts as a bona fide target gene of p53/TP53. May play a role in the TP53-dependent growth regulatory pathway. May contribute to TP53-mediated apoptosis by regulation of TP53 expression and translocation to the nucleus and nucleolus. The polypeptide is Zinc finger matrin-type protein 3 (Rattus norvegicus (Rat)).